A 252-amino-acid chain; its full sequence is Probable NADP-dependent dehydrogenase HI_1430 (252 aa).

7–31 (LVTGATAGFGLAICKKLIEAGYKVI) contacts NADP(+). S137 contributes to the substrate binding site. Y150 (proton acceptor) is an active-site residue.

Belongs to the short-chain dehydrogenases/reductases (SDR) family.

In Haemophilus influenzae (strain ATCC 51907 / DSM 11121 / KW20 / Rd), this protein is Probable NADP-dependent dehydrogenase HI_1430.